The following is a 254-amino-acid chain: Dihydroanticapsin 7-dehydrogenase (254 aa).

9–31 (LITGGASGIGYAAVQAFLNQQAN) is an NAD(+) binding site. Residue S139 coordinates substrate. Y152 serves as the catalytic Proton acceptor.

This sequence belongs to the short-chain dehydrogenases/reductases (SDR) family.

It carries out the reaction L-dihydroanticapsin + NAD(+) = L-anticapsin + NADH + H(+). It participates in antibiotic biosynthesis; bacilysin biosynthesis. Its function is as follows. Part of the bacABCDEFG operon responsible for the biosynthesis of bacilysin, an irreversible inactivator of the glutaminase domain of glucosamine synthetase. Catalyzes the dehydrogenation of the C7-hydroxyl group in the 4S-tetrahydrotyrosine (4S-H4Tyr) to yield anticapsin (epoxycyclohexanonyl-Ala). The sequence is that of Dihydroanticapsin 7-dehydrogenase from Bacillus amyloliquefaciens (Bacillus velezensis).